Here is an 87-residue protein sequence, read N- to C-terminus: Large ribosomal subunit protein bL27 (87 aa).

A disordered region spans residues 1–21; that stretch reads MAHKKAGGSSRNGRDSESKRL.

The protein belongs to the bacterial ribosomal protein bL27 family.

The sequence is that of Large ribosomal subunit protein bL27 from Aromatoleum aromaticum (strain DSM 19018 / LMG 30748 / EbN1) (Azoarcus sp. (strain EbN1)).